The chain runs to 70 residues: Large ribosomal subunit protein bL31 (70 aa).

Zn(2+) is bound by residues C16, C18, C37, and C40.

Belongs to the bacterial ribosomal protein bL31 family. Type A subfamily. Part of the 50S ribosomal subunit. Zn(2+) serves as cofactor.

Binds the 23S rRNA. In Shewanella amazonensis (strain ATCC BAA-1098 / SB2B), this protein is Large ribosomal subunit protein bL31.